Consider the following 283-residue polypeptide: Pantothenate synthetase (283 aa).

Residue 30-37 coordinates ATP; the sequence is MGNLHDGH. The active-site Proton donor is H37. Q61 provides a ligand contact to (R)-pantoate. Q61 serves as a coordination point for beta-alanine. Residue 149 to 152 coordinates ATP; sequence GEKD. (R)-pantoate is bound at residue Q155. Residue 186–189 participates in ATP binding; sequence LSSR.

Belongs to the pantothenate synthetase family. In terms of assembly, homodimer.

It localises to the cytoplasm. The enzyme catalyses (R)-pantoate + beta-alanine + ATP = (R)-pantothenate + AMP + diphosphate + H(+). It participates in cofactor biosynthesis; (R)-pantothenate biosynthesis; (R)-pantothenate from (R)-pantoate and beta-alanine: step 1/1. Its function is as follows. Catalyzes the condensation of pantoate with beta-alanine in an ATP-dependent reaction via a pantoyl-adenylate intermediate. The sequence is that of Pantothenate synthetase from Escherichia coli (strain ATCC 8739 / DSM 1576 / NBRC 3972 / NCIMB 8545 / WDCM 00012 / Crooks).